A 490-amino-acid chain; its full sequence is Monocarboxylate transporter 3 (490 aa).

Topologically, residues 1 to 14 are cytoplasmic; that stretch reads MGAGGPRRGAGPPD. A helical transmembrane segment spans residues 15–35; sequence GGWGWVVLGACFVITGFAYGF. Over 36-58 the chain is Extracellular; that stretch reads PKAVSVFFRELKRDFGAGYSDTA. A helical membrane pass occupies residues 59–79; that stretch reads WVSSIMLAMLYGTGPLSSILV. The Cytoplasmic portion of the chain corresponds to 80–85; the sequence is TRFGCR. Residues 86–106 traverse the membrane as a helical segment; sequence PVMLAGGLLASAGMILASFAS. Residues 107–115 are Extracellular-facing; that stretch reads RLLELYLTA. Residues 116–136 form a helical membrane-spanning segment; the sequence is GVLTGLGLALNFQPSLIMLGL. Residues 137–147 lie on the Cytoplasmic side of the membrane; the sequence is YFERRRPLANG. The chain crosses the membrane as a helical span at residues 148–168; that stretch reads LAAAGSPVFLSTLSPLGQLLG. Over 169 to 172 the chain is Extracellular; the sequence is ERFG. Residues 173–193 form a helical membrane-spanning segment; the sequence is WRGGFLLFGGLLLHCCACGAV. Over 194 to 230 the chain is Cytoplasmic; sequence MRPPPGPQPRPDPAPPGGRARHRQLLDLAVCTDRTFM. Residues 231–251 form a helical membrane-spanning segment; it reads VYMVTKFLMALGLFVPAILLV. Topologically, residues 252-257 are extracellular; the sequence is NYAKDA. Residues 258 to 278 traverse the membrane as a helical segment; it reads GVPDAEAAFLLSIVGFVDIVA. The Cytoplasmic segment spans residues 279–293; the sequence is RPACGALAGLGRLRP. A helical transmembrane segment spans residues 294–314; the sequence is HVPYLFSLALLANGLTDLISA. The Extracellular segment spans residues 315–318; sequence RARS. A helical membrane pass occupies residues 319-339; that stretch reads YGTLVAFCIAFGLSYGMVGAL. Over 340–352 the chain is Cytoplasmic; the sequence is QFEVLMATVGAPR. Residues 353–373 traverse the membrane as a helical segment; sequence FPSALGLVLLVEAVAVLIGPP. Residues 374–386 lie on the Extracellular side of the membrane; that stretch reads SAGRLVDALKNYE. A helical transmembrane segment spans residues 387–407; it reads IIFYLAGSEVVLAGVFMAVTT. Residues 408–490 lie on the Cytoplasmic side of the membrane; it reads YCCQRCSKDI…GGHEAHGQNA (83 aa). The disordered stretch occupies residues 419-490; that stretch reads PGPSAEGGTS…GGHEAHGQNA (72 aa). Basolateral sorting signal stretches follow at residues 426-460 and 461-480; these read GTSD…VLSP and RAGS…HESV. The segment covering 475 to 490 has biased composition (basic and acidic residues); it reads LSHESVGGHEAHGQNA.

This sequence belongs to the major facilitator superfamily. Monocarboxylate porter (TC 2.A.1.13) family. As to expression, retinal pigment epithelium.

Its subcellular location is the basolateral cell membrane. It catalyses the reaction (S)-lactate(in) + H(+)(in) = (S)-lactate(out) + H(+)(out). Its function is as follows. Probable retinal pigment epithelium (RPE)-specific proton-coupled L-lactate transporter. May facilitate transport of lactate and H(+) out of the retina and could therefore play a role in pH and ion homeostasis of the outer retina. This Rattus norvegicus (Rat) protein is Monocarboxylate transporter 3 (Slc16a8).